Reading from the N-terminus, the 131-residue chain is Peptide methionine sulfoxide reductase MsrB (131 aa).

Residues 8 to 130 enclose the MsrB domain; sequence LDTWREELTD…NSLSLKLVPR (123 aa). Residues cysteine 47, cysteine 50, cysteine 96, and cysteine 99 each contribute to the Zn(2+) site. Cysteine 119 (nucleophile) is an active-site residue.

It belongs to the MsrB Met sulfoxide reductase family. Zn(2+) is required as a cofactor.

It carries out the reaction L-methionyl-[protein] + [thioredoxin]-disulfide + H2O = L-methionyl-(R)-S-oxide-[protein] + [thioredoxin]-dithiol. In Ectopseudomonas mendocina (strain ymp) (Pseudomonas mendocina), this protein is Peptide methionine sulfoxide reductase MsrB.